Consider the following 412-residue polypeptide: Multifunctional CCA protein (412 aa).

2 residues coordinate ATP: Gly8 and Arg11. CTP is bound by residues Gly8 and Arg11. The Mg(2+) site is built by Asp21 and Asp23. ATP is bound by residues Arg91, Arg137, and Arg140. The CTP site is built by Arg91, Arg137, and Arg140. In terms of domain architecture, HD spans 225-326 (TGIHVMMVID…ADMLQATDAY (102 aa)).

The protein belongs to the tRNA nucleotidyltransferase/poly(A) polymerase family. Bacterial CCA-adding enzyme type 1 subfamily. In terms of assembly, monomer. Can also form homodimers and oligomers. It depends on Mg(2+) as a cofactor. Ni(2+) serves as cofactor.

The catalysed reaction is a tRNA precursor + 2 CTP + ATP = a tRNA with a 3' CCA end + 3 diphosphate. It catalyses the reaction a tRNA with a 3' CCA end + 2 CTP + ATP = a tRNA with a 3' CCACCA end + 3 diphosphate. Its function is as follows. Catalyzes the addition and repair of the essential 3'-terminal CCA sequence in tRNAs without using a nucleic acid template. Adds these three nucleotides in the order of C, C, and A to the tRNA nucleotide-73, using CTP and ATP as substrates and producing inorganic pyrophosphate. tRNA 3'-terminal CCA addition is required both for tRNA processing and repair. Also involved in tRNA surveillance by mediating tandem CCA addition to generate a CCACCA at the 3' terminus of unstable tRNAs. While stable tRNAs receive only 3'-terminal CCA, unstable tRNAs are marked with CCACCA and rapidly degraded. The sequence is that of Multifunctional CCA protein from Nitrosomonas europaea (strain ATCC 19718 / CIP 103999 / KCTC 2705 / NBRC 14298).